Reading from the N-terminus, the 144-residue chain is Transmembrane protein 170A (144 aa).

Over 1 to 50 (MEREGSGGGGGSAGLLQQILSLKLVPRVGNGTLCPNSTSLCSFPEMWYGV) the chain is Extracellular. 2 N-linked (GlcNAc...) asparagine glycosylation sites follow: Asn30 and Asn36. Residues 51–71 (FLWALMSSVFFHVPAGLLALF) form a helical membrane-spanning segment. The Cytoplasmic segment spans residues 72 to 85 (TLRHHKYGRFMSVS). Residues 86 to 106 (ILLMGIVGPITAGILTSAAIA) form a helical membrane-spanning segment. Residues 107–116 (GVYRAAGKEM) are Extracellular-facing. A helical transmembrane segment spans residues 117 to 137 (IPFEALTLGTGQTFCVVVVSF). The Cytoplasmic portion of the chain corresponds to 138-144 (LRVLATL).

Belongs to the TMEM170 family. As to quaternary structure, interacts with RTN4.

The protein resides in the endoplasmic reticulum membrane. The protein localises to the nucleus envelope. In terms of biological role, acts as a regulator of endoplasmic reticulum (ER) and nuclear envelope (NE) morphogenesis. Affects the ratio between tubular ER and ER sheets by promoting sheet formation at the expense of tubules. Influences NE expansion, nuclear pore complex formation and proper localization of inner nuclear membrane proteins. The protein is Transmembrane protein 170A (Tmem170a) of Mus musculus (Mouse).